A 121-amino-acid polypeptide reads, in one-letter code: Ribosome-binding factor A (121 aa).

The protein belongs to the RbfA family. In terms of assembly, monomer. Binds 30S ribosomal subunits, but not 50S ribosomal subunits or 70S ribosomes.

Its subcellular location is the cytoplasm. Its function is as follows. One of several proteins that assist in the late maturation steps of the functional core of the 30S ribosomal subunit. Associates with free 30S ribosomal subunits (but not with 30S subunits that are part of 70S ribosomes or polysomes). Required for efficient processing of 16S rRNA. May interact with the 5'-terminal helix region of 16S rRNA. This is Ribosome-binding factor A from Oenococcus oeni (strain ATCC BAA-331 / PSU-1).